Here is an 838-residue protein sequence, read N- to C-terminus: MLETVKLVTKRDGSVEPYDEKVVRSRIVNLMSGIDSYYVDVDDLVRVVGEGVREGMSTSMLDELLAETAAYCVTKHPDYGLLAGRLAVTALHKTTTESVLDSFRVLHEHVSQATKRHAPLISEELWDIANKHSAALQQIINYERDFDFEYFGYKTLERSYLLRVHKGRGVMEVVERPQQMFLRVALGIHGEDLERVKETYDYMSQGFFTHATPTLFNAGTPFPQMSSCFLVAMREDSIDGIYDTLKQCAIISKSAGGIGIHMHNIRAAGSYIAGTNGTSNGLVPMLRVWNNTARYVDQGGGKRKGAFAIYLEPWHADIFGFLLLKKNTGKEDQRARDLFYGLWIPDLFMERVESHGTWTLMDPNTAPFLSDCYGQEFTDLYERYEREGRGVRTIQAQELWFLILESQVETGVPFMLYKDACNFKSNQKNLGTIKCSNLCTEIVEYTSRDEVAVCNLASIALPRFVKDGAFDYVALKEVTKVVTRNLNRVIDRNHYPVCEARYSNLRHRPVGIGVQGLADAFALLSLPFAHPEAKKLNRQIFETIYIAAVEASTELAEKDGPYETFKGSPASEGKLQFDLWDEERRIRGMNEDSVHSHCGLWDWDSLKERVVKVGMRNSLLIAPMPTASTSQILGNNECIEPFTSNIYVRRVLSGEFPVVNKHLVKELIRLRLWNDDMRRKIIALNGSVSGIKEIPERIRELYKVVWEIRQKDLIDMAADRGRYIDQSQSLNLFLATPTSSQLTSMHFYSWKKGLKTGMYYLRSQPAADAIKFTLDPKAMKELPKPDKQSKEEVHGSVGRGKRKRVGEKPTANHSNAGAPNLNGPPDTDGDGGCLNCGS.

One can recognise an ATP-cone domain in the interval 6 to 97 (KLVTKRDGSV…VTALHKTTTE (92 aa)). Residues 10–11 (KR), 16–22 (EPYDEKV), Thr58, and Asp62 contribute to the ATP site. Residue Ser227 participates in GDP binding. Cysteines 228 and 454 form a disulfide. DTTP contacts are provided by residues 236-238 (DSI), Lys253, Arg266, and 273-274 (AG). Position 437 (Asn437) interacts with GDP. Residue Asn437 is the Proton acceptor of the active site. The active-site Cysteine radical intermediate is Cys439. Residues Glu441 and 626 to 629 (TAST) each bind GDP. Glu441 functions as the Proton acceptor in the catalytic mechanism. The span at 780-794 (KELPKPDKQSKEEVH) shows a compositional bias: basic and acidic residues. Positions 780–838 (KELPKPDKQSKEEVHGSVGRGKRKRVGEKPTANHSNAGAPNLNGPPDTDGDGGCLNCGS) are disordered.

Belongs to the ribonucleoside diphosphate reductase large chain family. Heterodimer of a large and a small subunit.

It catalyses the reaction a 2'-deoxyribonucleoside 5'-diphosphate + [thioredoxin]-disulfide + H2O = a ribonucleoside 5'-diphosphate + [thioredoxin]-dithiol. The catalysed reaction is dCDP + [thioredoxin]-disulfide + H2O = CDP + [thioredoxin]-dithiol. Its activity is regulated as follows. Under complex allosteric control mediated by deoxynucleoside triphosphates and ATP binding to separate specificity and activation sites on the large subunit. The type of nucleotide bound at the specificity site determines substrate preference. It seems probable that ATP makes the enzyme reduce CDP and UDP, dGTP favors ADP reduction and dTTP favors GDP reduction. Stimulated by ATP and inhibited by dATP binding to the activity site. Provides the precursors necessary for DNA synthesis. Catalyzes the rate limiting step in the de novo synthesis of deoxyribonucleotides by directly reducing ribonucleotides to the corresponding deoxyribonucleotides. The chain is Ribonucleoside-diphosphate reductase large subunit (RNR1) from Trypanosoma brucei brucei.